The chain runs to 306 residues: MAALLGRDLLSLADLTPTELQELLQLATQLKSQQLKLRCNKVLGLLFSKASTRTRVSFTVAMYQLGGQVIDLNPNVTQVSRGEPVQDTARVLERYLDVLAIRTFEQQELATFAEYAKIPVINALTDLEHPCQILADLLTVQECFDSISGLTLTYVGDGNNVANSLMLGCALAGMNVRIATPSGYEPNPQVVAQAQAIADGKTEILLTNDPDLATKGASVLYTDVWASMGQEAEADDRFPIFQPYQISEQLLSLAEPNAIVLHCLPAHRGEEITEEVIEGSQSRVWQQAENRLHVQKALLASILGAE.

Residues 51–54, Gln78, Arg102, and 129–132 contribute to the carbamoyl phosphate site; these read STRT and HPCQ. L-ornithine contacts are provided by residues Asn160, Asp223, and 227–228; that span reads SM. Residues 263–264 and Arg291 contribute to the carbamoyl phosphate site; that span reads CL.

This sequence belongs to the aspartate/ornithine carbamoyltransferase superfamily. OTCase family.

It is found in the cytoplasm. The enzyme catalyses carbamoyl phosphate + L-ornithine = L-citrulline + phosphate + H(+). It functions in the pathway amino-acid biosynthesis; L-arginine biosynthesis; L-arginine from L-ornithine and carbamoyl phosphate: step 1/3. In terms of biological role, reversibly catalyzes the transfer of the carbamoyl group from carbamoyl phosphate (CP) to the N(epsilon) atom of ornithine (ORN) to produce L-citrulline. This Nostoc sp. (strain PCC 7120 / SAG 25.82 / UTEX 2576) protein is Ornithine carbamoyltransferase.